Consider the following 122-residue polypeptide: Large ribosomal subunit protein uL14 (122 aa).

It belongs to the universal ribosomal protein uL14 family. As to quaternary structure, part of the 50S ribosomal subunit. Forms a cluster with proteins L3 and L19. In the 70S ribosome, L14 and L19 interact and together make contacts with the 16S rRNA in bridges B5 and B8.

Binds to 23S rRNA. Forms part of two intersubunit bridges in the 70S ribosome. The sequence is that of Large ribosomal subunit protein uL14 from Nitrosomonas europaea (strain ATCC 19718 / CIP 103999 / KCTC 2705 / NBRC 14298).